A 205-amino-acid chain; its full sequence is Thymidylate kinase (205 aa).

10-17 (GTEGVGKS) contacts ATP.

This sequence belongs to the thymidylate kinase family.

It catalyses the reaction dTMP + ATP = dTDP + ADP. In terms of biological role, phosphorylation of dTMP to form dTDP in both de novo and salvage pathways of dTTP synthesis. The protein is Thymidylate kinase of Teredinibacter turnerae (strain ATCC 39867 / T7901).